An 89-amino-acid polypeptide reads, in one-letter code: Large ribosomal subunit protein bL27 (89 aa).

The segment at 1-21 (MAHKKAGGSSRNGRDSESKRL) is disordered.

It belongs to the bacterial ribosomal protein bL27 family.

The sequence is that of Large ribosomal subunit protein bL27 from Bartonella quintana (strain Toulouse) (Rochalimaea quintana).